The primary structure comprises 141 residues: Hemoglobin subunit alpha-1 (141 aa).

The region spanning V1 to R141 is the Globin domain. Position 58 (H58) interacts with O2. A heme b-binding site is contributed by H87.

It belongs to the globin family. Heterotetramer of two alpha chains and two beta chains. In terms of tissue distribution, red blood cells.

Involved in oxygen transport from the lung to the various peripheral tissues. This chain is Hemoglobin subunit alpha-1, found in Bos mutus grunniens (Wild yak).